We begin with the raw amino-acid sequence, 441 residues long: Glutamate--tRNA ligase 1 (441 aa).

Positions 8–18 (PSPTGHIHVGN) match the 'HIGH' region motif. Residues 239–243 (ELSKR) carry the 'KMSKS' region motif. Position 242 (Lys-242) interacts with ATP.

This sequence belongs to the class-I aminoacyl-tRNA synthetase family. Glutamate--tRNA ligase type 1 subfamily. As to quaternary structure, monomer.

Its subcellular location is the cytoplasm. The enzyme catalyses tRNA(Glu) + L-glutamate + ATP = L-glutamyl-tRNA(Glu) + AMP + diphosphate. Its function is as follows. Catalyzes the attachment of glutamate to tRNA(Glu) in a two-step reaction: glutamate is first activated by ATP to form Glu-AMP and then transferred to the acceptor end of tRNA(Glu). This chain is Glutamate--tRNA ligase 1, found in Paracoccus denitrificans (strain Pd 1222).